The following is a 677-amino-acid chain: WD repeat-containing protein 48 (677 aa).

Phosphotyrosine is present on Y28. WD repeat units follow at residues 28 to 67 (YNRNGVNALQLDPALNRLFTAGRDSIIRIWSVNQHKQDPY), 73 to 112 (HHTDWVNDIVLCCNGKTLISASSDTTVKVWNAHKGFCMST), 115 to 154 (THKDYVKALAYAKDKELVASAGLDRQIFLWDVNTLTALTA), 166 to 205 (GNKDSIYSLAMNQLGTIIVSGSTEKVLRVWDPRTCAKLMK), 208 to 247 (GHTDNVKALLLNRDGTQCLSGSSDGTIRLWSLGQQRCIAT), 250 to 289 (VHDEGVWALQVNDAFTHVYSGGRDRKIYCTDLRNPDIRVL), 292 to 334 (EEKA…NFRA), and 358 to 397 (KGGASIIQCHILNDKRHILTKDTNNNVAYWDVLKACKVED). Residue K214 is modified to N6-acetyllysine. An N6-acetyllysine modification is found at K578. Residues 607 to 628 (LDNESQTTSSSNNEKPGEQEKE) form a disordered region. Over residues 609-620 (NESQTTSSSNNE) the composition is skewed to low complexity. T613 bears the Phosphothreonine mark.

It belongs to the WD repeat WDR48 family. Interacts with USP46. Interacts with USP1. Interacts with USP12. Component of the USP12-WDR20-WDR48 deubiquitinating complex. Component of the USP12-DMWD-WDR48 deubiquitinating complex. Interacts with PHLPP1. Interacts with RAD51AP1; the interaction is direct and promotes formation of a trimeric complex with RAD51 via RAD51AP1. Interacts with ATAD5; the interaction regulates USP1-mediated PCNA deubiquitination. Interacts with RAD51; the interaction is enhanced under replication stress. Interacts with ITCH; the interaction is more efficient when both USP12 and WDR48/UAF1 are involved and may facilitate recruitment of the USP12 deubiquitinating complex to Notch. As to quaternary structure, (Microbial infection) Interacts with papillomavirus HPV11 E1 protein. In terms of assembly, (Microbial infection) Interacts with Saimiriine herpesvirus TIP protein. (Microbial infection) Interacts with human cytomegalovirus protein UL138. As to quaternary structure, (Microbial infection) Interacts with Epstein-Barr virus protein EBNA3. As to expression, ubiquitous.

The protein localises to the nucleus. Its subcellular location is the cytoplasm. The protein resides in the lysosome. It localises to the late endosome. Functionally, regulator of deubiquitinating complexes, which acts as a strong activator of USP1, USP12 and USP46. Enhances the USP1-mediated deubiquitination of FANCD2; USP1 being almost inactive by itself. Activates deubiquitination by increasing the catalytic turnover without increasing the affinity of deubiquitinating enzymes for the substrate. Also activates deubiquitinating activity of complexes containing USP12. In complex with USP12, acts as a potential tumor suppressor by positively regulating PHLPP1 stability. Docks at the distal end of the USP12 fingers domain and induces a cascade of structural changes leading to the activation of the enzyme. Together with RAD51AP1, promotes DNA repair by stimulating RAD51-mediated homologous recombination. Binds single-stranded DNA (ssDNA) and double-stranded DNA (dsDNA). DNA-binding is required both for USP1-mediated deubiquitination of FANCD2 and stimulation of RAD51-mediated homologous recombination: both WDR48/UAF1 and RAD51AP1 have coordinated role in DNA-binding during these processes. Together with ATAD5 and by regulating USP1 activity, has a role in PCNA-mediated translesion synthesis (TLS) by deubiquitinating monoubiquitinated PCNA. Together with ATAD5, has a role in recruiting RAD51 to stalled forks during replication stress. (Microbial infection) In case of infection by Herpesvirus saimiri, may play a role in vesicular transport or membrane fusion events necessary for transport to lysosomes. Induces lysosomal vesicle formation via interaction with Herpesvirus saimiri tyrosine kinase-interacting protein (TIP). Subsequently, TIP recruits tyrosine-protein kinase LCK, resulting in down-regulation of T-cell antigen receptor TCR. May play a role in generation of enlarged endosomal vesicles via interaction with TIP. In case of infection by papillomavirus HPV11, promotes the maintenance of the viral genome via its interaction with HPV11 helicase E1. The protein is WD repeat-containing protein 48 of Homo sapiens (Human).